Here is a 329-residue protein sequence, read N- to C-terminus: Malate dehydrogenase (329 aa).

NAD(+) is bound at residue 12-18 (GAAGQIG). Arginine 95 and arginine 101 together coordinate substrate. NAD(+) contacts are provided by residues asparagine 108, glutamine 115, and 132–134 (VGN). Residues asparagine 134 and arginine 165 each coordinate substrate. Residue histidine 190 is the Proton acceptor of the active site.

This sequence belongs to the LDH/MDH superfamily. MDH type 2 family.

The enzyme catalyses (S)-malate + NAD(+) = oxaloacetate + NADH + H(+). Functionally, catalyzes the reversible oxidation of malate to oxaloacetate. This is Malate dehydrogenase from Janthinobacterium sp. (strain Marseille) (Minibacterium massiliensis).